Reading from the N-terminus, the 175-residue chain is Heme-dependent oxidative N-demethylase delta subunit (175 aa).

As to quaternary structure, the heme-dependent oxidative N-demethylase (HODM) is a heterotetramer composed of a catalytic alpha subunit, a FMN/2Fe-2S-dependent oxidoreductase beta subunit, a gamma subunit with putative aminotransferase activity, and a delta subunit of unknown function.

In terms of biological role, component of the heme-dependent oxidative N-demethylase (HODM) enzyme, that catalyzes the NADPH-dependent oxidation of dimethylamine (DMA) to methylamine (MA) and formaldehyde. Functions in bacterial methylated amine catabolism, linking alkylamine oxidation to the tetrahydrofolate C1 pool. The function of the delta subunit is unknown. This chain is Heme-dependent oxidative N-demethylase delta subunit, found in Ectopseudomonas mendocina (strain ymp) (Pseudomonas mendocina).